A 183-amino-acid polypeptide reads, in one-letter code: uncharacterized protein (183 aa).

This is an uncharacterized protein from Saccharolobus islandicus (Sulfolobus islandicus).